Here is a 112-residue protein sequence, read N- to C-terminus: MKTAVLLVCLAYVMAAILSLCASAPSWRPQGRFGKRTIPDRLPQTEESSLPDFGFSHLPALPLELFYNPRDLVHSGFRPRLCSVSGVEGYPPCVESHSDRKMKNLLDDLFGL.

The signal sequence occupies residues 1–23; the sequence is MKTAVLLVCLAYVMAAILSLCAS. Phe33 is subject to Phenylalanine amide.

Post-translationally, the prohormone is proteolytically cleaved in 2 steps, yielding first 2 products: luqin and PRMP. In the second step, PRMP is cleaved to yield luqin-B and luqin-C. Neurons L2-4 and L6, also called giant dorsal LUQ (Left Upper Quadrant) neurons of the abdominal ganglion. Also expressed in smaller neurons in the CNS and in peripheral organs such as the kidney.

It localises to the secreted. The polypeptide is Abdominal ganglion neuropeptides L5-67 (Aplysia californica (California sea hare)).